The chain runs to 225 residues: GTP cyclohydrolase 1 (225 aa).

A compositionally biased stretch (basic and acidic residues) spans 1-12 (MERSKQSHDNQA). A disordered region spans residues 1 to 59 (MERSKQSHDNQADSRPTTNESSLNGHFDGLVKKTPGMWDVKGRGTAGESSSHTGSSVVE). Composition is skewed to polar residues over residues 13–24 (DSRPTTNESSLN) and 47–58 (GESSSHTGSSVV). Positions 149, 152, and 220 each coordinate Zn(2+).

The protein belongs to the GTP cyclohydrolase I family. Toroid-shaped homodecamer, composed of two pentamers of five dimers.

The protein resides in the cytoplasm. Its subcellular location is the nucleus. The enzyme catalyses GTP + H2O = 7,8-dihydroneopterin 3'-triphosphate + formate + H(+). Its pathway is cofactor biosynthesis; 7,8-dihydroneopterin triphosphate biosynthesis; 7,8-dihydroneopterin triphosphate from GTP: step 1/1. With respect to regulation, GTP shows a positive allosteric effect, and tetrahydrobiopterin inhibits the enzyme activity. Zinc is required for catalytic activity. Inhibited by Mg(2+). May positively regulate nitric oxide synthesis in endothelial cells. May be involved in dopamine synthesis. May modify pain sensitivity and persistence. This Oncorhynchus mykiss (Rainbow trout) protein is GTP cyclohydrolase 1 (gch1).